Here is a 490-residue protein sequence, read N- to C-terminus: Betaine aldehyde dehydrogenase (490 aa).

Position 93 (aspartate 93) interacts with K(+). 150-152 (GAW) is an NAD(+) binding site. The active-site Charge relay system is lysine 162. An NAD(+)-binding site is contributed by 176 to 179 (KPSE). Valine 180 contacts K(+). Residue 230-233 (GIAS) participates in NAD(+) binding. Leucine 246 is a K(+) binding site. Residue glutamate 252 is the Proton acceptor of the active site. The NAD(+) site is built by glycine 254, cysteine 286, and glutamate 387. Cysteine 286 (nucleophile) is an active-site residue. Cysteine sulfenic acid (-SOH) is present on cysteine 286. K(+)-binding residues include lysine 457 and glycine 460. Residue glutamate 464 is the Charge relay system of the active site.

It belongs to the aldehyde dehydrogenase family. As to quaternary structure, dimer of dimers. Requires K(+) as cofactor.

The catalysed reaction is betaine aldehyde + NAD(+) + H2O = glycine betaine + NADH + 2 H(+). It functions in the pathway amine and polyamine biosynthesis; betaine biosynthesis via choline pathway; betaine from betaine aldehyde: step 1/1. Involved in the biosynthesis of the osmoprotectant glycine betaine. Catalyzes the irreversible oxidation of betaine aldehyde to the corresponding acid. The polypeptide is Betaine aldehyde dehydrogenase (Yersinia pseudotuberculosis serotype IB (strain PB1/+)).